The following is a 959-amino-acid chain: Isoleucine--tRNA ligase (959 aa).

The 'HIGH' region signature appears at 60–70 (PYANGSLHMGH). Glu569 is a binding site for L-isoleucyl-5'-AMP. Residues 610–614 (KMSKS) carry the 'KMSKS' region motif. Position 613 (Lys613) interacts with ATP. Residues Cys928, Cys931, Cys948, and Cys951 each contribute to the Zn(2+) site.

The protein belongs to the class-I aminoacyl-tRNA synthetase family. IleS type 1 subfamily. In terms of assembly, monomer. Zn(2+) is required as a cofactor.

The protein resides in the cytoplasm. The enzyme catalyses tRNA(Ile) + L-isoleucine + ATP = L-isoleucyl-tRNA(Ile) + AMP + diphosphate. In terms of biological role, catalyzes the attachment of isoleucine to tRNA(Ile). As IleRS can inadvertently accommodate and process structurally similar amino acids such as valine, to avoid such errors it has two additional distinct tRNA(Ile)-dependent editing activities. One activity is designated as 'pretransfer' editing and involves the hydrolysis of activated Val-AMP. The other activity is designated 'posttransfer' editing and involves deacylation of mischarged Val-tRNA(Ile). In Rippkaea orientalis (strain PCC 8801 / RF-1) (Cyanothece sp. (strain PCC 8801)), this protein is Isoleucine--tRNA ligase.